Here is a 280-residue protein sequence, read N- to C-terminus: tRNA dimethylallyltransferase (280 aa).

9 to 16 (GPTGSGKT) provides a ligand contact to ATP. Residue 11–16 (TGSGKT) coordinates substrate. The interval 34–37 (DSVS) is interaction with substrate tRNA.

The protein belongs to the IPP transferase family. In terms of assembly, monomer. Requires Mg(2+) as cofactor.

The enzyme catalyses adenosine(37) in tRNA + dimethylallyl diphosphate = N(6)-dimethylallyladenosine(37) in tRNA + diphosphate. Catalyzes the transfer of a dimethylallyl group onto the adenine at position 37 in tRNAs that read codons beginning with uridine, leading to the formation of N6-(dimethylallyl)adenosine (i(6)A). This chain is tRNA dimethylallyltransferase, found in Acholeplasma laidlawii (strain PG-8A).